A 507-amino-acid polypeptide reads, in one-letter code: Protein O-glucosyltransferase 3 (507 aa).

Residues 1 to 20 (MRRLPRALLLQLRLALLVAA) form the signal peptide. One copy of the Filamin repeat lies at 24–134 (EVLVSAPRSL…VAQSPYILKG (111 aa)). N-linked (GlcNAc...) asparagine glycans are attached at residues asparagine 61 and asparagine 306. The short motif at 504-507 (REEL) is the Prevents secretion from ER element.

The protein belongs to the KDELC family.

The protein resides in the endoplasmic reticulum lumen. The enzyme catalyses L-seryl-[EGF-like domain protein] + UDP-alpha-D-glucose = 3-O-(beta-D-glucosyl)-L-seryl-[EGF-like domain protein] + UDP + H(+). It carries out the reaction L-seryl-[EGF-like domain protein] + UDP-alpha-D-xylose = 3-O-(beta-D-xylosyl)-L-seryl-[EGF-like domain protein] + UDP + H(+). It participates in protein modification; protein glycosylation. Protein glucosyltransferase that catalyzes the transfer of glucose from UDP-glucose to a serine residue within the consensus sequence peptide C-X-N-T-X-G-S-F-X-C. Can also catalyze the transfer of xylose from UDP-xylose but less efficiently. Specifically targets extracellular EGF repeats of proteins such as NOTCH1, NOTCH3, FBN1, FBN2 and LTBP1. May regulate the transport of NOTCH1 and NOTCH3 to the plasma membrane and thereby the Notch signaling pathway. The chain is Protein O-glucosyltransferase 3 from Homo sapiens (Human).